Reading from the N-terminus, the 118-residue chain is MGTYAIIETGGEQLRVEPGRFYDARCFASLNPRILSANAKILIHRVLMIRRESTTNLGHPWLRNAIVRGRILHSCYGEKITIYKMHSKKKVRRKLGYRQKLVRFVVDSISSNGEEFFD.

It belongs to the bacterial ribosomal protein bL21 family. In terms of assembly, part of the 50S ribosomal subunit.

It localises to the plastid. The protein resides in the chloroplast. This protein binds to 23S rRNA. This Psilotum nudum (Whisk fern) protein is Large ribosomal subunit protein bL21c.